Consider the following 388-residue polypeptide: Succinate--CoA ligase [ADP-forming] subunit beta (388 aa).

Positions 9–244 (KSLFAEYGLP…PSQDDAREAH (236 aa)) constitute an ATP-grasp domain. ATP is bound by residues Lys-46, 53–55 (GRG), Glu-99, Thr-102, and Glu-107. Mg(2+) contacts are provided by Asn-199 and Asp-213. Substrate contacts are provided by residues Asn-264 and 321-323 (GIV).

It belongs to the succinate/malate CoA ligase beta subunit family. In terms of assembly, heterotetramer of two alpha and two beta subunits. Mg(2+) is required as a cofactor.

The enzyme catalyses succinate + ATP + CoA = succinyl-CoA + ADP + phosphate. It catalyses the reaction GTP + succinate + CoA = succinyl-CoA + GDP + phosphate. It participates in carbohydrate metabolism; tricarboxylic acid cycle; succinate from succinyl-CoA (ligase route): step 1/1. Its function is as follows. Succinyl-CoA synthetase functions in the citric acid cycle (TCA), coupling the hydrolysis of succinyl-CoA to the synthesis of either ATP or GTP and thus represents the only step of substrate-level phosphorylation in the TCA. The beta subunit provides nucleotide specificity of the enzyme and binds the substrate succinate, while the binding sites for coenzyme A and phosphate are found in the alpha subunit. The sequence is that of Succinate--CoA ligase [ADP-forming] subunit beta from Shewanella oneidensis (strain ATCC 700550 / JCM 31522 / CIP 106686 / LMG 19005 / NCIMB 14063 / MR-1).